A 180-amino-acid polypeptide reads, in one-letter code: ATP-dependent protease subunit HslV (180 aa).

Threonine 5 is an active-site residue. Positions 161, 164, and 167 each coordinate Na(+).

The protein belongs to the peptidase T1B family. HslV subfamily. In terms of assembly, a double ring-shaped homohexamer of HslV is capped on each side by a ring-shaped HslU homohexamer. The assembly of the HslU/HslV complex is dependent on binding of ATP.

The protein resides in the cytoplasm. It carries out the reaction ATP-dependent cleavage of peptide bonds with broad specificity.. Allosterically activated by HslU binding. In terms of biological role, protease subunit of a proteasome-like degradation complex believed to be a general protein degrading machinery. The protein is ATP-dependent protease subunit HslV of Campylobacter curvus (strain 525.92).